The chain runs to 362 residues: Serpentine receptor class delta-2 (362 aa).

A run of 7 helical transmembrane segments spans residues 27–47 (LSCLICLPGALCNAILIYLIW), 57–77 (YAIYILNFALFDFATCIISFF), 104–124 (FCYFCHCFMCHALAHSQWILL), 144–164 (LIRNSVALYSMSLCFLLVYVF), 209–229 (LISILYMTIPCVPIYCAILYF), 264–284 (GIPIFWLVASGIFTMSQFGII), and 292–312 (ITFRLMDCIPLISPIVTIIFV).

Belongs to the nematode receptor-like protein srd family.

Its subcellular location is the membrane. In terms of biological role, thought to be a chemosensory receptor. This is Serpentine receptor class delta-2 (srd-2) from Caenorhabditis elegans.